Reading from the N-terminus, the 1315-residue chain is DNA-directed RNA polymerase subunit beta' (1315 aa).

Zn(2+) is bound by residues Cys60, Cys62, Cys75, and Cys78. Positions 535, 537, and 539 each coordinate Mg(2+). Positions 890, 967, 974, and 977 each coordinate Zn(2+).

The protein belongs to the RNA polymerase beta' chain family. As to quaternary structure, the RNAP catalytic core consists of 2 alpha, 1 beta, 1 beta' and 1 omega subunit. When a sigma factor is associated with the core the holoenzyme is formed, which can initiate transcription. Mg(2+) serves as cofactor. The cofactor is Zn(2+).

It carries out the reaction RNA(n) + a ribonucleoside 5'-triphosphate = RNA(n+1) + diphosphate. Functionally, DNA-dependent RNA polymerase catalyzes the transcription of DNA into RNA using the four ribonucleoside triphosphates as substrates. This Mycobacterium sp. (strain MCS) protein is DNA-directed RNA polymerase subunit beta'.